A 97-amino-acid polypeptide reads, in one-letter code: Small ribosomal subunit protein bS20 (97 aa).

It belongs to the bacterial ribosomal protein bS20 family.

Binds directly to 16S ribosomal RNA. The chain is Small ribosomal subunit protein bS20 from Prochlorococcus marinus (strain MIT 9215).